The following is a 617-amino-acid chain: BTB/POZ domain-containing protein At3g08570 (617 aa).

The BTB domain maps to 36-106; sequence GDITIVVDGE…CYGINFEITI (71 aa). The 281-residue stretch at 210-490 folds into the NPH3 domain; that stretch reads EWWIEDLSAL…VRVLYSEQLR (281 aa). Y431 bears the Phosphotyrosine mark. Disordered stretches follow at residues 505–525 and 585–617; these read LSSQKHSSENPSRAVSPRDTY and GGGPTEGKLRNANRKSKSRLERKTVRSRPESMF. Residues 602–617 are compositionally biased toward basic and acidic residues; sequence SRLERKTVRSRPESMF.

This sequence belongs to the NPH3 family.

The protein operates within protein modification; protein ubiquitination. In terms of biological role, may act as a substrate-specific adapter of an E3 ubiquitin-protein ligase complex (CUL3-RBX1-BTB) which mediates the ubiquitination and subsequent proteasomal degradation of target proteins. This Arabidopsis thaliana (Mouse-ear cress) protein is BTB/POZ domain-containing protein At3g08570.